The following is a 231-amino-acid chain: UPF0758 protein RBAM_025090 (231 aa).

The MPN domain maps to 109-231 (VIRSPEDGAK…FVSLKEKGYL (123 aa)). Residues His-180, His-182, and Asp-193 each contribute to the Zn(2+) site. The JAMM motif motif lies at 180 to 193 (HNHPSGDPTPSRED).

The protein belongs to the UPF0758 family.

This chain is UPF0758 protein RBAM_025090, found in Bacillus velezensis (strain DSM 23117 / BGSC 10A6 / LMG 26770 / FZB42) (Bacillus amyloliquefaciens subsp. plantarum).